The chain runs to 144 residues: Large ribosomal subunit protein uL11 (144 aa).

Belongs to the universal ribosomal protein uL11 family. Part of the ribosomal stalk of the 50S ribosomal subunit. Interacts with L10 and the large rRNA to form the base of the stalk. L10 forms an elongated spine to which L12 dimers bind in a sequential fashion forming a multimeric L10(L12)X complex. In terms of processing, one or more lysine residues are methylated.

Forms part of the ribosomal stalk which helps the ribosome interact with GTP-bound translation factors. In Streptomyces coelicolor (strain ATCC BAA-471 / A3(2) / M145), this protein is Large ribosomal subunit protein uL11.